Reading from the N-terminus, the 137-residue chain is Hydrogenase maturation factor HypA (137 aa).

His-2 serves as a coordination point for Ni(2+). Zn(2+) contacts are provided by Cys-73, Cys-75, Cys-105, and Cys-108.

This sequence belongs to the HypA/HybF family.

Involved in the maturation of [NiFe] hydrogenases. Required for nickel insertion into the metal center of the hydrogenase. The polypeptide is Hydrogenase maturation factor HypA (Methanosarcina mazei (strain ATCC BAA-159 / DSM 3647 / Goe1 / Go1 / JCM 11833 / OCM 88) (Methanosarcina frisia)).